Reading from the N-terminus, the 439-residue chain is MAISTPSNGVSHVAKPLPNLKEVNKGIETDSEDRAFWWGALSEPLASLLEANHYTKEVQLHYLRWFYQWILPALGPRPLDGKPYYGSWITHDLSPFEYSLNWKEKSSKQTIRFTIEAVTKQSGTASDPINQLGAKEFLEAVSKDVPGMDLTRFNQFLEATNVPNDCVDDAIAKHPAHFPRSRVWIAFDLEHSGNLMAKSYFLPHWRAIQSGISANTIIGDTVKECNKADGSSYDGSLNAIESYLATFTRPEEAPQMGLLSNDCVAETPGSRLKVYFRSSADTLAKAKDMYNLGGRLKGPKMDASLKGISDFWYHLFGLDSSDPASDDKVCIGNHKCIFVYEMRSSQGSEPDIDVKFHIPMWQLGKTDGQISELLASWFESHGHPDLASRYKSDLGTAFPKHNITGKSVGTHTYISITHTPKTGLYMTMYLSPKLPEFYY.

Residues Trp88–Ile89, Glu97, Arg112, Lys198, Tyr200, Arg271, Lys273, and Tyr275 each bind substrate.

This sequence belongs to the tryptophan dimethylallyltransferase family.

The catalysed reaction is siccayne + dimethylallyl diphosphate = pestalodiol + diphosphate. It participates in secondary metabolite biosynthesis. In terms of biological role, prenyltransferase; part of the gene cluster that mediates the biosynthesis of iso-A82775C, a enylepoxycyclohexane and biosynthetic precursor of the chloropestolide anticancer natural products. Within the cluster, the prenyltransferase iacE prenylates siccayne to generate pestalodiol E, using dimethylallyl diphosphate (DMAPP) as cosubstrate. The probable oxidoreductase iacF is then involved in the epoxidation of pestalodiol F to pestalodiol F, which is further converted to pestalofone A by the short-chain dehydrogenase/reductase iacG. Iso-A82775C is subsequently generated from pestalofone A by the short-chain dehydrogenase/reductase iacC. Iso-A82775C is further condensed with maldoxin via a Diels-Alder reaction to produce the anticancer natural products chloropestolides A to E. The sequence is that of Prenyltransferase iacE from Pestalotiopsis fici (strain W106-1 / CGMCC3.15140).